We begin with the raw amino-acid sequence, 1265 residues long: Cohesin subunit SA-1 (1265 aa).

Residues 1-16 (MITSELSVLQDSTNES) are compositionally biased toward polar residues. Disordered regions lie at residues 1–21 (MITS…VMHT) and 37–91 (DLEV…EGDP). Residues 62-73 (TPGDRSRAEPGS) are compositionally biased toward basic and acidic residues. Residues 303 to 388 (FVHRYRDAIA…NRFKDRIVSM (86 aa)) enclose the SCD domain. Disordered regions lie at residues 1063–1097 (GDED…KRVI) and 1111–1130 (DTIQ…TVLR). Residues 1069-1082 (SVNSGGSNSKGSSV) show a composition bias toward low complexity. Positions 1083-1095 (RSKKGRPPLHKKR) are enriched in basic residues. Residues 1111–1129 (DTIQTPGALTTPQLTSTVL) are compositionally biased toward polar residues.

This sequence belongs to the SCC3 family. Interacts directly with RAD21 in cohesin complex. Cohesin complexes are composed of a heterodimer between and SMC3, which are attached via their hinge domain, and RAD21 which link them at their heads, and one STAG protein (STAG1 OR STAG2). In cohesin complexes, STAG1 is mutually exclusive with STAG2. In terms of processing, phosphorylated by PLK1. The large dissociation of cohesin from chromosome arms during prophase is partly due to its phosphorylation.

Its subcellular location is the nucleus. It is found in the chromosome. It localises to the centromere. Component of cohesin complex, a complex required for the cohesion of sister chromatids after DNA replication. The cohesin complex apparently forms a large proteinaceous ring within which sister chromatids can be trapped. At anaphase, the complex is cleaved and dissociates from chromatin, allowing sister chromatids to segregate. The cohesin complex may also play a role in spindle pole assembly during mitosis. This Xenopus laevis (African clawed frog) protein is Cohesin subunit SA-1 (stag1).